Consider the following 411-residue polypeptide: Dual-specificity RNA methyltransferase RlmN (411 aa).

E125 acts as the Proton acceptor in catalysis. The Radical SAM core domain maps to 131-380 (EEGRGTLCIS…IRTPRGRDIL (250 aa)). Cysteines 138 and 383 form a disulfide. [4Fe-4S] cluster is bound by residues C145, C149, and C152. Residues 209-210 (GE), S241, 263-265 (SLH), and N340 each bind S-adenosyl-L-methionine. C383 acts as the S-methylcysteine intermediate in catalysis.

It belongs to the radical SAM superfamily. RlmN family. The cofactor is [4Fe-4S] cluster.

The protein localises to the cytoplasm. It carries out the reaction adenosine(2503) in 23S rRNA + 2 reduced [2Fe-2S]-[ferredoxin] + 2 S-adenosyl-L-methionine = 2-methyladenosine(2503) in 23S rRNA + 5'-deoxyadenosine + L-methionine + 2 oxidized [2Fe-2S]-[ferredoxin] + S-adenosyl-L-homocysteine. The catalysed reaction is adenosine(37) in tRNA + 2 reduced [2Fe-2S]-[ferredoxin] + 2 S-adenosyl-L-methionine = 2-methyladenosine(37) in tRNA + 5'-deoxyadenosine + L-methionine + 2 oxidized [2Fe-2S]-[ferredoxin] + S-adenosyl-L-homocysteine. Its function is as follows. Specifically methylates position 2 of adenine 2503 in 23S rRNA and position 2 of adenine 37 in tRNAs. m2A2503 modification seems to play a crucial role in the proofreading step occurring at the peptidyl transferase center and thus would serve to optimize ribosomal fidelity. The protein is Dual-specificity RNA methyltransferase RlmN of Brucella melitensis biotype 2 (strain ATCC 23457).